The primary structure comprises 581 residues: Leucine-rich repeat-containing protein 15 (581 aa).

A signal peptide spans 1–21; it reads MPLKHYLLLLVGCQAWGAGLA. In terms of domain architecture, LRRNT spans 22–53; that stretch reads YHGCPSECTCSRASQVECTGARIVAVPTPLPW. Residues 22–538 are Extracellular-facing; it reads YHGCPSECTC…VWGMTQAQSG (517 aa). 15 LRR repeats span residues 54 to 75, 78 to 99, 102 to 123, 126 to 147, 150 to 171, 174 to 195, 198 to 219, 222 to 243, 246 to 267, 270 to 291, 294 to 315, 318 to 339, 342 to 363, 366 to 387, and 390 to 411; these read NAMS…PFLN, ALIA…AFRN, SLRY…LFQG, SLES…HFSQ, NLKE…AFDH, GLTK…VFQH, NLQV…TFDG, NLQE…LFHN, NLQR…VFMQ, QLNR…IFGP, NLRE…VFSN, QLQV…AFNG, ELRE…VFRM, NLQN…IFAN, and GLMA…IFDH. N75 carries an N-linked (GlcNAc...) asparagine glycan. N-linked (GlcNAc...) asparagine glycosylation is present at N369. The LRRCT domain maps to 423–475; the sequence is NPWRCDSDILPLRNWLLLNQPRLGTDTVPVCFSPANVRGQSLIIINVNVAVPS. Residues 489-509 are disordered; sequence WYPDTPSYPDTTSVSSTTELT. Low complexity predominate over residues 499-509; sequence TTSVSSTTELT. The helical transmembrane segment at 539 to 559 threads the bilayer; sequence LAIAAIVIGIVALACSLAACV. Over 560-581 the chain is Cytoplasmic; the sequence is GCCCCKKRSQAVLMQMKAPNEC.

(Microbial infection) Interacts with human coronavirus SARS-CoV-2 spike protein (via RBD domain); the interaction is direct and sequesters virions at the cell surface. As to quaternary structure, (Microbial infection) Interacts with human coronavirus SARS-CoV-2 spike protein (via RBD domain); the interaction is direct. In terms of tissue distribution, expressed in brain and placenta. Expressed in lung fibroblasts. Expressed in chodrocytes.

The protein localises to the cell membrane. (Microbial infection) Modulates the ability of SARS-CoV-2 to infect host cells through interaction with the spike protein. Does not act as a SARS-CoV-2 entry receptor but sequesters virions and antagonizes in trans SARS-CoV-2 infection of ACE2(+) cells when expressed on nearby cells. This chain is Leucine-rich repeat-containing protein 15 (LRRC15), found in Homo sapiens (Human).